The primary structure comprises 378 residues: Spermatogenic leucine zipper protein 1 (378 aa).

Residues 1-31 form a disordered region; that stretch reads MSDTDNSAEMPARCPSPNPAPGAKQEPPNSG. S106 is subject to Phosphoserine. The tract at residues 116–122 is interaction with PPP1CC isoform gamma-2; sequence KNKIRFK. A helix-loop-helix motif region spans residues 116-127; sequence KNKIRFKDDLFI. Positions 128 to 193 are basic motif; the sequence is HFDPEREQNT…HLRGEYRKLR (66 aa). Residues 182-233 are a coiled coil; the sequence is SLHLRGEYRKLRNNMEQLLQEADHWSKQHNELSELMRSYQECQNETQETTDK. S207 is subject to Phosphoserine. The tract at residues 252 to 273 is leucine-zipper; it reads LEEQVKKLSHDTHALHLIAALL.

In terms of assembly, interacts with PPP1CC isoform gamma-2. This interaction can prevent SPZ1 binding to the E-box and inhibits PPP1CC activity. Phosphorylated by MAPK1/ERK2 and MAPK3/ERK1. Expressed specifically in the testis and epidydimis. In the testis expressed in both germ cells and somatic cells (Sertoli and Leydig cells). Expressed in several tumor cell lines.

The protein localises to the cytoplasm. The protein resides in the nucleus. Transcription factor that binds to the DNA sequence 5'-CANNTG-3'(E box) and the G-box motif. Directly binds to a guanine-rich region of the PCNA promoter and up-regulates its expression which in turn induces cell transformation and tumor formation. May play an important role in the regulation of cell proliferation and differentiation during spermatogenesis. This is Spermatogenic leucine zipper protein 1 (Spz1) from Mus musculus (Mouse).